The sequence spans 283 residues: MAVVTTRQLLESGVHFGHQTRRWNPKMKRFIFTERNGIYIIDLHQSLTYIDKAYAFVKETVAKGGQILFVGTKKQAQESIVEQATRVGMPYVNQRWLGGMLTNFQTISKRIARLKELEAMDFDKVSGSGLTKKELLMLSREKDKLEKDLGGIRDMPKVPQAVWVVDTKKEHLAIDEARKLKIPVVAILDTNCDPDEVDYAIPGNDDAIRSVSLLTRIIADAAAEGLMARSAGKSGEQPAEAEPMPDWERELLEGDGAKTEAKAEEPKAEAKKADEAPEAEKSN.

Residues 229–283 (RSAGKSGEQPAEAEPMPDWERELLEGDGAKTEAKAEEPKAEAKKADEAPEAEKSN) form a disordered region. Basic and acidic residues predominate over residues 246–283 (DWERELLEGDGAKTEAKAEEPKAEAKKADEAPEAEKSN).

This sequence belongs to the universal ribosomal protein uS2 family.

This chain is Small ribosomal subunit protein uS2, found in Cutibacterium acnes (strain DSM 16379 / KPA171202) (Propionibacterium acnes).